We begin with the raw amino-acid sequence, 273 residues long: Small ribosomal subunit protein eS1 (273 aa).

This sequence belongs to the eukaryotic ribosomal protein eS1 family. As to quaternary structure, component of the small ribosomal subunit. Mature ribosomes consist of a small (40S) and a large (60S) subunit. The 40S subunit contains about 33 different proteins and 1 molecule of RNA (18S). The 60S subunit contains about 49 different proteins and 3 molecules of RNA (25S, 5.8S and 5S).

Its subcellular location is the cytoplasm. The polypeptide is Small ribosomal subunit protein eS1 (rps3a) (Dictyostelium discoideum (Social amoeba)).